A 331-amino-acid polypeptide reads, in one-letter code: Betaine-homocysteine S-methyltransferase (331 aa).

Residues 3 to 324 enclose the Hcy-binding domain; it reads VNQKWNWDTK…TDVLAIRKYV (322 aa). Residues C243, C309, and C310 each coordinate Zn(2+).

The protein belongs to the Betaine-homocysteine S-methyltransferase, BHMT family. Requires Zn(2+) as cofactor.

It catalyses the reaction L-homocysteine + glycine betaine = N,N-dimethylglycine + L-methionine. It participates in amino-acid biosynthesis; L-methionine biosynthesis via de novo pathway. Its function is as follows. Involved in the regulation of homocysteine metabolism. Converts betaine and homocysteine to dimethylglycine and methionine, respectively. The polypeptide is Betaine-homocysteine S-methyltransferase (Drosophila melanogaster (Fruit fly)).